A 204-amino-acid chain; its full sequence is dCTP deaminase, dUMP-forming (204 aa).

DCTP contacts are provided by residues 117-122, His128, Gly132, Asp135, 143-145, Gln163, Tyr177, Lys184, and Gln188; these read RSSLGR and TLE. Glu145 serves as the catalytic Proton donor/acceptor.

As to quaternary structure, homotrimer. Two trimers assemble into a hexamer by stacking on top of each other. It depends on Mg(2+) as a cofactor.

The enzyme catalyses dCTP + 2 H2O = dUMP + NH4(+) + diphosphate. Its pathway is pyrimidine metabolism; dUMP biosynthesis; dUMP from dCTP: step 1/1. Its activity is regulated as follows. Inhibited by dTTP. In terms of biological role, bifunctional enzyme that catalyzes both the deamination of dCTP to dUTP and the hydrolysis of dUTP to dUMP without releasing the toxic dUTP intermediate. It also acts as a dUTP diphosphatase with a lower affinity for dUTP than for dCTP. The polypeptide is dCTP deaminase, dUMP-forming (Methanocaldococcus jannaschii (strain ATCC 43067 / DSM 2661 / JAL-1 / JCM 10045 / NBRC 100440) (Methanococcus jannaschii)).